The chain runs to 644 residues: Threonine--tRNA ligase (644 aa).

In terms of domain architecture, TGS spans 1–61; the sequence is MPDIQLPDGS…DQDAEVAIVT (61 aa). Residues 242–535 are catalytic; sequence DHRRIGTELE…LIEHYEGKFP (294 aa). Zn(2+) is bound by residues C335, H386, and H512.

It belongs to the class-II aminoacyl-tRNA synthetase family. As to quaternary structure, homodimer. Zn(2+) is required as a cofactor.

It localises to the cytoplasm. The enzyme catalyses tRNA(Thr) + L-threonine + ATP = L-threonyl-tRNA(Thr) + AMP + diphosphate + H(+). Catalyzes the attachment of threonine to tRNA(Thr) in a two-step reaction: L-threonine is first activated by ATP to form Thr-AMP and then transferred to the acceptor end of tRNA(Thr). Also edits incorrectly charged L-seryl-tRNA(Thr). The protein is Threonine--tRNA ligase of Acidithiobacillus ferrooxidans (strain ATCC 23270 / DSM 14882 / CIP 104768 / NCIMB 8455) (Ferrobacillus ferrooxidans (strain ATCC 23270)).